The primary structure comprises 395 residues: Elongation factor Tu (395 aa).

The tr-type G domain maps to 10–204; the sequence is KPHVNVGTIG…AVDNWVPLPE (195 aa). Residues 19-26 form a G1 region; it reads GHVDHGKT. GTP is bound at residue 19-26; the sequence is GHVDHGKT. Thr-26 is a Mg(2+) binding site. The G2 stretch occupies residues 60 to 64; the sequence is GITIN. The interval 81–84 is G3; sequence DCPG. GTP is bound by residues 81–85 and 136–139; these read DCPGH and NKCD. The tract at residues 136–139 is G4; that stretch reads NKCD. A G5 region spans residues 174–176; it reads SAL.

This sequence belongs to the TRAFAC class translation factor GTPase superfamily. Classic translation factor GTPase family. EF-Tu/EF-1A subfamily. As to quaternary structure, monomer.

It is found in the cytoplasm. It carries out the reaction GTP + H2O = GDP + phosphate + H(+). Its function is as follows. GTP hydrolase that promotes the GTP-dependent binding of aminoacyl-tRNA to the A-site of ribosomes during protein biosynthesis. The polypeptide is Elongation factor Tu (Porphyromonas gingivalis (strain ATCC 33277 / DSM 20709 / CIP 103683 / JCM 12257 / NCTC 11834 / 2561)).